The sequence spans 316 residues: Epoxide hydrolase 3 (316 aa).

The region spanning 25–302 (PVVLLLHGFP…ACHFINQERP (278 aa)) is the AB hydrolase-1 domain. The active-site Nucleophile is Asp101. Tyr150 lines the an epoxide pocket. The Proton donor role is filled by Tyr230. His295 acts as the Proton acceptor in catalysis.

Belongs to the AB hydrolase superfamily. Epoxide hydrolase family. In terms of assembly, homodimer. Highly expressed in young fruits 15 days after anthesis (15-DAA).

The enzyme catalyses an epoxide + H2O = an ethanediol. It catalyses the reaction (24S)-24,25-epoxycucurbitadienol + H2O = (24R)-24,25-dihydroxycucurbitadienol. It participates in secondary metabolite biosynthesis; terpenoid biosynthesis. Epoxide hydrolase involved in the biosynthesis of cucurbitacin and mogroside tetracyclic triterpene natural products (e.g. siamenoside I and mogrosides IV, V and VI). Cucurbitacins have cytotoxic properties and exhibit deterrent taste as a defense barrier against herbivores. Mogrosides are nonsugar highly oxygenated compounds used as high-intensity zero-calorie sweeteners; they also possess pharmacological properties such as regulating immunity, lowering blood sugar and lipid levels, protecting the liver, and acting as antioxidants and antitumor agents. Catalyzes the hydrolysis of aromatic epoxide-containing substrates, such as the conversion of 24,25-epoxycucurbitadienol to 24,25-dihydroxycucurbitadienol. The protein is Epoxide hydrolase 3 of Siraitia grosvenorii (Monk's fruit).